Reading from the N-terminus, the 169-residue chain is Peptide methionine sulfoxide reductase MsrA (169 aa).

Cys10 is an active-site residue.

The protein belongs to the MsrA Met sulfoxide reductase family.

It carries out the reaction L-methionyl-[protein] + [thioredoxin]-disulfide + H2O = L-methionyl-(S)-S-oxide-[protein] + [thioredoxin]-dithiol. The catalysed reaction is [thioredoxin]-disulfide + L-methionine + H2O = L-methionine (S)-S-oxide + [thioredoxin]-dithiol. In terms of biological role, has an important function as a repair enzyme for proteins that have been inactivated by oxidation. Catalyzes the reversible oxidation-reduction of methionine sulfoxide in proteins to methionine. This Streptococcus uberis (strain ATCC BAA-854 / 0140J) protein is Peptide methionine sulfoxide reductase MsrA.